Here is an 856-residue protein sequence, read N- to C-terminus: Subtilisin-like protease SBT2.2 (856 aa).

The first 21 residues, 1–21 (MRRVLMVNFGVLLLFCFGVLS), serve as a signal peptide directing secretion. Residues 22 to 159 (NSFGQDNGGD…IVLDFSVRTA (138 aa)) constitute a propeptide, activation peptide. N-linked (GlcNAc...) asparagine glycosylation is found at N35 and N85. An Inhibitor I9 domain is found at 40–159 (VYIVTLRQAS…IVLDFSVRTA (120 aa)). A Peptidase S8 domain is found at 164 to 709 (PQFMGLPKGA…NGFVNATAAL (546 aa)). D193 (charge relay system) is an active-site residue. N-linked (GlcNAc...) asparagine glycosylation is found at N204 and N255. H269 (charge relay system) is an active-site residue. 5 N-linked (GlcNAc...) asparagine glycosylation sites follow: N412, N441, N495, N540, and N568. The PA domain maps to 432–528 (MISALDALKN…MDMPGIIIPS (97 aa)). The active-site Charge relay system is the S634. N704, N730, N738, N748, N767, N782, and N823 each carry an N-linked (GlcNAc...) asparagine glycan.

This sequence belongs to the peptidase S8 family.

The protein localises to the secreted. This Arabidopsis thaliana (Mouse-ear cress) protein is Subtilisin-like protease SBT2.2.